Here is a 321-residue protein sequence, read N- to C-terminus: ATP-dependent 6-phosphofructokinase (321 aa).

Glycine 12 serves as a coordination point for ATP. Residues 22-26 and 55-60 each bind ADP; these read RGVVR and RYSVSD. Residues 73-74 and 103-106 contribute to the ATP site; these read RF and GDGS. Aspartate 104 contacts Mg(2+). Residue 127–129 participates in substrate binding; it reads TID. Aspartate 129 serves as the catalytic Proton acceptor. An ADP-binding site is contributed by arginine 156. Substrate contacts are provided by residues arginine 164 and 171–173; that span reads MGR. Residues 187-189, arginine 213, and 215-217 each bind ADP; these read GCE and KRH. Residues glutamate 224, arginine 245, and 251–254 contribute to the substrate site; that span reads HIQR.

This sequence belongs to the phosphofructokinase type A (PFKA) family. ATP-dependent PFK group I subfamily. Prokaryotic clade 'B1' sub-subfamily. As to quaternary structure, homotetramer. Mg(2+) is required as a cofactor.

The protein localises to the cytoplasm. It carries out the reaction beta-D-fructose 6-phosphate + ATP = beta-D-fructose 1,6-bisphosphate + ADP + H(+). Its pathway is carbohydrate degradation; glycolysis; D-glyceraldehyde 3-phosphate and glycerone phosphate from D-glucose: step 3/4. Allosterically activated by ADP and other diphosphonucleosides, and allosterically inhibited by phosphoenolpyruvate. Functionally, catalyzes the phosphorylation of D-fructose 6-phosphate to fructose 1,6-bisphosphate by ATP, the first committing step of glycolysis. The chain is ATP-dependent 6-phosphofructokinase from Haemophilus influenzae (strain 86-028NP).